A 355-amino-acid chain; its full sequence is Tryptophan--tRNA ligase (355 aa).

ATP contacts are provided by residues 13–15 (QPT) and 21–22 (GN). The short motif at 14–22 (PTGNLHLGN) is the 'HIGH' region element. Asp137 lines the L-tryptophan pocket. ATP contacts are provided by residues 149–151 (GED), Ile208, and 217–221 (KMSKS). Positions 217 to 221 (KMSKS) match the 'KMSKS' region motif.

Belongs to the class-I aminoacyl-tRNA synthetase family. Homodimer.

The protein localises to the cytoplasm. It carries out the reaction tRNA(Trp) + L-tryptophan + ATP = L-tryptophyl-tRNA(Trp) + AMP + diphosphate + H(+). Its function is as follows. Catalyzes the attachment of tryptophan to tRNA(Trp). The polypeptide is Tryptophan--tRNA ligase (Brucella melitensis biotype 1 (strain ATCC 23456 / CCUG 17765 / NCTC 10094 / 16M)).